The sequence spans 496 residues: Catalase-A (496 aa).

Residues His-54 and Asn-128 contribute to the active site. Tyr-338 is a heme binding site. The short motif at 494 to 496 is the Microbody targeting signal element; it reads SNL.

It belongs to the catalase family. Heme is required as a cofactor.

The protein resides in the peroxisome matrix. The enzyme catalyses 2 H2O2 = O2 + 2 H2O. Functionally, catalyzes the degradation of hydrogen peroxide (H(2)O(2)) generated by peroxisomal oxidases to water and oxygen, thereby protecting cells from the toxic effects of hydrogen peroxide. This is Catalase-A (catA) from Dictyostelium discoideum (Social amoeba).